The sequence spans 303 residues: Short chain dehydrogenase pigC (303 aa).

Residues Ile45, Asp103, Asn130, Arg164, Tyr196, Lys200, and Thr231 each contribute to the NADP(+) site. Catalysis depends on Tyr196, which acts as the Proton donor. The active-site Lowers pKa of active site Tyr is the Lys200.

It belongs to the short-chain dehydrogenases/reductases (SDR) family.

It participates in secondary metabolite biosynthesis. In terms of biological role, short chain dehydrogenase; part of the gene cluster that mediates the biosynthesis of azaphilone pigments (MonAzPs), a complex mixture of compounds with a common azaphilone skeleton very widely used as food colorants. Within the pathway, pigC intercepts the very reactive benzaldehyde produced by the nrPKS pigA to reduce the omega-1 carbonyl to the alcohol to provide the first stable enzyme-free MonAzPs intermediate, 6-(4-hydroxy-2-oxopentyl)-3-methyl-2,4-dioxocyclohexane carbaldehyde, also known as M7PKS-1. The first step of the pathway is performed by the nrPKS pigA that forms the hexaketide precursor from successive condensations of five malonyl-CoA units, with a simple acetyl-CoA starter unit. The role of esterase pigG is not clear, but it may play at most a supplementary role in the formation of the benzaldehyde produced by the pigA nrPKS. This very reactive benzaldehyde is intercepted by the pigC ketoreductase that to provide the first stable enzyme-free MonAzPs intermediate, M7PKS-1. The FAD-dependent monooxygenase pigN hydroxylates M7PKS-1 at C-4, which triggers the formation of the pyran ring. PigJ, pigK and pigD are involved in the acetylation of the pyran ring. PigJ and pigK form the two subunits of a dedicated fungal FAS that produces the side chain fatty acyl moiety of MonAzPs and pigD transfers the fatty acyl chain to the C-4 alcohol. PigM and pigO are involved in the elimination of the omega-1 alcohol. PigM acts as an O-acetyltransferase that synthesizes the putative O-11 acetyl intermediate whereas pigO eliminates acetic acid to yield an intermediate with a C10(11) double bond. The dehydration of the C-11 alcohol followed by the reduction of the C6(7) double bond by the NAD(P)H-dependent oxidoreductase pigE increases the electrophilicity of the C-5 ketone of the resulting acyl benzopyran. This in turn sets up the C-5 ketone for an intramolecular Knoevenagel aldol condensation with the C-20 enol of the side chain. This condensation affords the characteristic linear tricyclic carbon skeletons of the yellow pigments that serve as the common precursors for the classical yellow pigments monascin and ankaflavin, orange pigments rubopunctatin and monascorubrin, and red pigments ribropunctamine and monascorubramine. The FAD-dependent oxidoreductase pigF is especially invoved in the biosynthesis of orange and red pigments via desaturation of C6(7). The protein is Short chain dehydrogenase pigC of Monascus ruber (Mold).